The primary structure comprises 349 residues: Spermidine/putrescine import ATP-binding protein PotA (349 aa).

The 231-residue stretch at 7–237 folds into the ABC transporter domain; sequence IELKGITKSY…PANSFVAKFI (231 aa). 39 to 46 contributes to the ATP binding site; the sequence is GPSGCGKT.

Belongs to the ABC transporter superfamily. Spermidine/putrescine importer (TC 3.A.1.11.1) family. As to quaternary structure, the complex is composed of two ATP-binding proteins (PotA), two transmembrane proteins (PotB and PotC) and a solute-binding protein (PotD).

It is found in the cell membrane. The catalysed reaction is ATP + H2O + polyamine-[polyamine-binding protein]Side 1 = ADP + phosphate + polyamineSide 2 + [polyamine-binding protein]Side 1.. Its function is as follows. Part of the ABC transporter complex PotABCD involved in spermidine/putrescine import. Responsible for energy coupling to the transport system. This Clostridium perfringens (strain SM101 / Type A) protein is Spermidine/putrescine import ATP-binding protein PotA.